Reading from the N-terminus, the 467-residue chain is Probable tryptophanase (467 aa).

Residue K263 is modified to N6-(pyridoxal phosphate)lysine.

It belongs to the beta-eliminating lyase family. It depends on pyridoxal 5'-phosphate as a cofactor.

It carries out the reaction L-tryptophan + H2O = indole + pyruvate + NH4(+). Its pathway is amino-acid degradation; L-tryptophan degradation via pyruvate pathway; indole and pyruvate from L-tryptophan: step 1/1. This is Probable tryptophanase (tnaA) from Aeropyrum pernix (strain ATCC 700893 / DSM 11879 / JCM 9820 / NBRC 100138 / K1).